The sequence spans 440 residues: GTPase Der (440 aa).

EngA-type G domains lie at Pro-4–Lys-168 and Ile-177–Ser-352. Residues Gly-10–Ser-17, Asp-57–Leu-61, Asn-120–Glu-123, Gly-183–Ser-190, Asp-230–Met-234, and Asn-295–Asp-298 contribute to the GTP site. One can recognise a KH-like domain in the interval Met-353–Thr-437.

The protein belongs to the TRAFAC class TrmE-Era-EngA-EngB-Septin-like GTPase superfamily. EngA (Der) GTPase family. In terms of assembly, associates with the 50S ribosomal subunit.

Functionally, GTPase that plays an essential role in the late steps of ribosome biogenesis. The chain is GTPase Der from Pelotomaculum thermopropionicum (strain DSM 13744 / JCM 10971 / SI).